The sequence spans 342 residues: Ketoreductase nvfG (342 aa).

It belongs to the NAD(P)-dependent epimerase/dehydratase family. Dihydroflavonol-4-reductase subfamily.

It functions in the pathway secondary metabolite biosynthesis; terpenoid biosynthesis. Functionally, ketoreductase; part of the gene cluster that mediates the biosynthesis of novofumigatonin, a heavily oxygenated meroterpenoid containing a unique orthoester moiety. The first step of the pathway is the synthesis of 3,5-dimethylorsellinic acid (DMOA) by the polyketide synthase nvfA via condensation of one acetyl-CoA starter unit with 3 malonyl-CoA units and 2 methylations. DMOA is then converted to farnesyl-DMOA by the farnesyltransferase nvfB. Epoxydation by FAD-dependent monooxygenase nvfK, followed by a protonation-initiated cyclization catalyzed by the terpene cyclase nvfL leads to the production of asnavolin H. The short chain dehydrogenase nvfC then as a 3-OH dehydrogenase of asnovolin H to yield chemesin D. There are two branches to synthesize asnovolin A from chemesin D. In one branch, chemesin D undergoes Baeyer-Villiger oxidation by nvfH, methylation by nvfJ, and enoyl reduction by the nvfM D enoylreductase that reduces the double bond between C-5'and C-6', to form respectively asnovolin I, asnovolin K, and asnovolin A. In the other branch, the methylation precedes the Baeyer-Villiger oxidation and the enoyl reduction to yield asnovolin A via the asnovolin J intermediate. Asnovolin A is further converted to fumigatonoid A by the Fe(II)/2-oxoglutarate-dependent dioxygenase nvfI that catalyzes an endoperoxidation reaction. The alpha/beta hydrolase nvfD then acts as an epimerase that converts fumigatonoid A to its C-5' epimer, which then undergoes spontaneous or nvfD-catalyzed lactonization. The following step utilizes the ketoreductase nvfG to produce fumigatonoid B. The dioxygenase nvfE further converts fumigatonoid B into fumigatonoid C. Finally the Fe(II)/2-oxoglutarate-dependent dioxygenase nvfF catalyzes two rounds of oxidation to transform fumigatonoid C into the end product, novofumigatonin A. This is Ketoreductase nvfG from Aspergillus novofumigatus (strain IBT 16806).